A 74-amino-acid chain; its full sequence is Acyclotide phyb-K (74 aa).

The signal sequence occupies residues 1–24 (MARVNSLKCALCFIVLILFVQLNC). The propeptide occupies 25–43 (IPETRVMAVELSRVFLQTS). Disulfide bonds link cysteine 47/cysteine 64, cysteine 51/cysteine 66, and cysteine 56/cysteine 71.

Contains 3 disulfide bonds. Expressed in midvein, lamina and periphery of leaves (at protein level).

In terms of biological role, probably participates in a plant defense mechanism. The polypeptide is Acyclotide phyb-K (Petunia hybrida (Petunia)).